A 141-amino-acid chain; its full sequence is Cytochrome c-type biogenesis protein CcmE (141 aa).

At 1–7 (MQRKHKR) the chain is on the cytoplasmic side. A helical; Signal-anchor for type II membrane protein transmembrane segment spans residues 8 to 28 (ILFVAVSFIALGCVSAFVLFE). Residues 29 to 141 (LSKSISFFCT…SSDAAVIGSS (113 aa)) are Periplasmic-facing. 2 residues coordinate heme: His121 and Tyr125.

The protein belongs to the CcmE/CycJ family.

The protein resides in the cell inner membrane. Functionally, heme chaperone required for the biogenesis of c-type cytochromes. Transiently binds heme delivered by CcmC and transfers the heme to apo-cytochromes in a process facilitated by CcmF and CcmH. The polypeptide is Cytochrome c-type biogenesis protein CcmE (Anaplasma phagocytophilum (strain HZ)).